The sequence spans 172 residues: ATP synthase subunit b (172 aa).

Residues 13-33 (GINGGDILFQLVMFLILLALL) form a helical membrane-spanning segment.

It belongs to the ATPase B chain family. As to quaternary structure, F-type ATPases have 2 components, F(1) - the catalytic core - and F(0) - the membrane proton channel. F(1) has five subunits: alpha(3), beta(3), gamma(1), delta(1), epsilon(1). F(0) has three main subunits: a(1), b(2) and c(10-14). The alpha and beta chains form an alternating ring which encloses part of the gamma chain. F(1) is attached to F(0) by a central stalk formed by the gamma and epsilon chains, while a peripheral stalk is formed by the delta and b chains.

It is found in the cell membrane. Functionally, f(1)F(0) ATP synthase produces ATP from ADP in the presence of a proton or sodium gradient. F-type ATPases consist of two structural domains, F(1) containing the extramembraneous catalytic core and F(0) containing the membrane proton channel, linked together by a central stalk and a peripheral stalk. During catalysis, ATP synthesis in the catalytic domain of F(1) is coupled via a rotary mechanism of the central stalk subunits to proton translocation. Its function is as follows. Component of the F(0) channel, it forms part of the peripheral stalk, linking F(1) to F(0). The protein is ATP synthase subunit b of Priestia megaterium (strain ATCC 12872 / QMB1551) (Bacillus megaterium).